Here is a 303-residue protein sequence, read N- to C-terminus: N-acetyl-D-glucosamine kinase (303 aa).

ATP contacts are provided by residues 4-11 (GFDVGGTK) and 133-140 (GFGGGLVF). Zn(2+) contacts are provided by H157, C177, C179, and C184.

It belongs to the ROK (NagC/XylR) family. NagK subfamily.

It carries out the reaction N-acetyl-D-glucosamine + ATP = N-acetyl-D-glucosamine 6-phosphate + ADP + H(+). Its pathway is cell wall biogenesis; peptidoglycan recycling. Functionally, catalyzes the phosphorylation of N-acetyl-D-glucosamine (GlcNAc) derived from cell-wall degradation, yielding GlcNAc-6-P. The chain is N-acetyl-D-glucosamine kinase from Photobacterium profundum (strain SS9).